Consider the following 339-residue polypeptide: Glucokinase (339 aa).

Gly-16–Thr-21 contributes to the ATP binding site.

Belongs to the bacterial glucokinase family.

The protein resides in the cytoplasm. It carries out the reaction D-glucose + ATP = D-glucose 6-phosphate + ADP + H(+). This is Glucokinase from Sinorhizobium fredii (strain NBRC 101917 / NGR234).